A 584-amino-acid polypeptide reads, in one-letter code: DNA mismatch repair protein MutL (584 aa).

It belongs to the DNA mismatch repair MutL/HexB family.

This protein is involved in the repair of mismatches in DNA. It is required for dam-dependent methyl-directed DNA mismatch repair. May act as a 'molecular matchmaker', a protein that promotes the formation of a stable complex between two or more DNA-binding proteins in an ATP-dependent manner without itself being part of a final effector complex. The protein is DNA mismatch repair protein MutL of Syntrophomonas wolfei subsp. wolfei (strain DSM 2245B / Goettingen).